The following is a 376-amino-acid chain: MVDQNKAFGWAANDESGVLSPFHFSRRENGENDVTVKILFCGVCHSDLHTIKNHWGFSRYPIIPGHEIVGIATKVGKNVTKFKEGDRVGVGVIIGSCQSCESCNQDLENYCPKVVFTYNSRSSDGTSRNQGGYSDVIVVDHRFVLSIPDGLPSDSGAPLLCAGITVYSPMKYYGMTKESGKRLGVNGLGGLGHIAVKIGKAFGLRVTVISRSSEKEREAIDRLGADSFLVTTDSQKMKEAVGTMDFIIDTVSAEHALLPLFSLLKVNGKLVALGLPEKPLDLPIFSLVLGRKMVGGSQIGGMKETQEMLEFCAKHKIVSDIELIKMSDINSAMDRLAKSDVRYRFVIDVANSLLPESSAEILTEQVDHGVSITSRF.

Cysteine 44 provides a ligand contact to Zn(2+). An NADP(+)-binding site is contributed by serine 46. Zn(2+) contacts are provided by histidine 66, glutamate 67, cysteine 97, cysteine 100, cysteine 103, cysteine 111, and cysteine 161. NADP(+)-binding positions include threonine 165, 187-192 (GLGGLG), 210-215 (SRSSEK), threonine 250, glycine 274, and 297-299 (SQI).

It belongs to the zinc-containing alcohol dehydrogenase family. In terms of assembly, homodimer. Requires Zn(2+) as cofactor. Expressed at the base of the stems.

It carries out the reaction (E)-cinnamyl alcohol + NADP(+) = (E)-cinnamaldehyde + NADPH + H(+). The catalysed reaction is (E)-coniferol + NADP(+) = (E)-coniferaldehyde + NADPH + H(+). It catalyses the reaction (E)-sinapyl alcohol + NADP(+) = (E)-sinapaldehyde + NADPH + H(+). The enzyme catalyses (E)-4-coumaroyl alcohol + NADP(+) = (E)-4-coumaraldehyde + NADPH + H(+). It carries out the reaction (E)-caffeyl alcohol + NADP(+) = (E)-caffeyl aldehyde + NADPH + H(+). It functions in the pathway aromatic compound metabolism; phenylpropanoid biosynthesis. Its function is as follows. Involved in lignin biosynthesis. Catalyzes the final step specific for the production of lignin monomers. Catalyzes the NADPH-dependent reduction of coniferaldehyde, 5-hydroxyconiferaldehyde, sinapaldehyde, 4-coumaraldehyde and caffeyl aldehyde to their respective alcohols. The sequence is that of Cinnamyl alcohol dehydrogenase 2 from Arabidopsis thaliana (Mouse-ear cress).